The sequence spans 523 residues: Nuclear receptor ROR-alpha (523 aa).

Over residues 1-26 (MESAPAAPDPAASEPGSSGSEAAAGS) the composition is skewed to low complexity. The tract at residues 1-63 (MESAPAAPDP…SRGISVTKKT (63 aa)) is disordered. Residue K38 is modified to N6-methyllysine. NR C4-type zinc fingers lie at residues 73–93 (CKIC…CEGC) and 109–133 (CPRQ…LQKC). The segment at residues 73–138 (CKICGDKSSG…RLQKCLAVGM (66 aa)) is a DNA-binding region (nuclear receptor). A disordered region spans residues 154–183 (DSLYAEVQKHRMQQQQRDHQQQPGEAEPLT). A Phosphothreonine; by MAPK1 modification is found at T183. K240 participates in a covalent cross-link: Glycyl lysine isopeptide (Lys-Gly) (interchain with G-Cter in SUMO). Positions 272–510 (ELEHLAQNIS…LHFPPLYKEL (239 aa)) constitute an NR LBD domain. An AF-2 motif is present at residues 506-511 (LYKELF).

Belongs to the nuclear hormone receptor family. NR1 subfamily. In terms of assembly, monomer. Interacts (via the DNA-binding domain) with HIF1A; the interaction enhances HIF1A transcription under hypoxia through increasing protein stability. Interacts with CEBPB; the interaction disrupts the interaction CEBPB:EP300. Interacts with the coactivators NCOA2, PPARGC1A (via LXXLL motif), EP300 and MED1. Interacts with the corepressor NCOR1. Interacts with MAGED1 and CTNNB1. Interacts with CRY1 and PER2. Interacts (via AF-2 motif) with PROX1. Interacts with NRIP1. Isoform 4 interacts (via AF-2 motif) with isoform 1 of FOXP3 (via LXXLL motif). In terms of processing, phosphorylation by conventional PKCs in neurons inhibits transcriptional activity. Phosphorylated on Thr-183 by MAPK1/ERK1 in vitro. Post-translationally, sumoylated by SENP1 and SENP2. Sumoylation, promoted by PIAS2, PIAS3, PIAS4 but not PIAS1, enhances the transcriptional activity. Desumoylated by SENP1. Ubiquitinated, leading to its degradation by the proteasome. Proteasomal degradation is required for efficient transcriptional activity and is prevented by HR. In terms of processing, monomethylated at Lys-38 by EZH2, this creates a degron recognized by a DCX (DDB1-DCAF1/VPRBP-CUL4A-RBX1) E3 ubiquitin ligase complex. Expressed in cerebellum, heart, liver, lung, kidney, retina and brown and white adipose tissues. Expressed in the subset of mature Th17 cells.

The protein localises to the nucleus. Its function is as follows. Nuclear receptor that binds DNA as a monomer to ROR response elements (RORE) containing a single core motif half-site 5'-AGGTCA-3' preceded by a short A-T-rich sequence. Key regulator of embryonic development, cellular differentiation, immunity, circadian rhythm as well as lipid, steroid, xenobiotics and glucose metabolism. Considered to have intrinsic transcriptional activity, have some natural ligands like oxysterols that act as agonists (25-hydroxycholesterol) or inverse agonists (7-oxygenated sterols), enhancing or repressing the transcriptional activity, respectively. Recruits distinct combinations of cofactors to target genes regulatory regions to modulate their transcriptional expression, depending on the tissue, time and promoter contexts. Regulates genes involved in photoreceptor development including OPN1SW, OPN1SM and ARR3 and skeletal muscle development with MYOD1. Required for proper cerebellum development, regulates SHH gene expression, among others, to induce granule cells proliferation as well as expression of genes involved in calcium-mediated signal transduction. Regulates the circadian expression of several clock genes, including CLOCK, BMAL1, NPAS2 and CRY1. Competes with NR1D1 for binding to their shared DNA response element on some clock genes such as BMAL1, CRY1 and NR1D1 itself, resulting in NR1D1-mediated repression or RORA-mediated activation of clock genes expression, leading to the circadian pattern of clock genes expression. Therefore influences the period length and stability of the clock. Regulates genes involved in lipid metabolism such as apolipoproteins APOA1, APOA5, APOC3 and PPARG. In liver, has specific and redundant functions with RORC as positive or negative modulator of expression of genes encoding phase I and phase II proteins involved in the metabolism of lipids, steroids and xenobiotics, such as CYP7B1 and SULT2A1. Induces a rhythmic expression of some of these genes. In addition, interplays functionally with NR1H2 and NR1H3 for the regulation of genes involved in cholesterol metabolism. Also involved in the regulation of hepatic glucose metabolism through the modulation of G6PC1 and PCK1. In adipose tissue, plays a role as negative regulator of adipocyte differentiation, probably acting through dual mechanisms. May suppress CEBPB-dependent adipogenesis through direct interaction and PPARG-dependent adipogenesis through competition for DNA-binding. Downstream of IL6 and TGFB and synergistically with RORC isoform 2, is implicated in the lineage specification of uncommitted CD4(+) T-helper (T(H)) cells into T(H)17 cells, antagonizing the T(H)1 program. Probably regulates IL17 and IL17F expression on T(H) by binding to the essential enhancer conserved non-coding sequence 2 (CNS2) in the IL17-IL17F locus. Involved in hypoxia signaling by interacting with and activating the transcriptional activity of HIF1A. May inhibit cell growth in response to cellular stress. May exert an anti-inflammatory role by inducing CHUK expression and inhibiting NF-kappa-B signaling. In Mus musculus (Mouse), this protein is Nuclear receptor ROR-alpha (Rora).